Reading from the N-terminus, the 477-residue chain is Tripartite motif-containing protein 72 (477 aa).

The Zn(2+) site is built by C14, C17, C29, H31, C34, C37, C53, C56, C86, H89, C97, D100, C105, C108, H114, and H117. The RING-type zinc finger occupies 14-57; the sequence is CPLCLQLFDAPVTAECGHSFCRACLIRVAGEPADDGTVACPCCQ. The B box-type zinc-finger motif lies at 81-122; the sequence is VPQGHCEEHLDPLSIYCEQDRTLVCGVCASLGSHRGHRLLPA. Positions 135–232 form a coiled coil; the sequence is QQKAQLQEAC…EKVLEEVADK (98 aa). S-nitrosocysteine is present on C144. A Phosphoserine modification is found at S255. In terms of domain architecture, B30.2/SPRY spans 271-475; it reads DFKFQVWKKM…PLLLVGPDSE (205 aa).

It belongs to the TRIM/RBCC family. As to quaternary structure, homodimer. Homooligomer; disulfide-linked. Oligomerizes on the phospholipid membrane. Interacts with DYSF and CAV3. In terms of processing, disulfide bond formation at Cys-242 occurs in case of membrane damage that cause the entry of the oxidized milieu of the extracellular space, resulting in homooligomerization. S-nitrosylation at Cys-144 stabilizes TRIM72 and protects against oxidation-induced protein degradation and cell death.

The protein localises to the cell membrane. Its subcellular location is the sarcolemma. It localises to the cytoplasmic vesicle membrane. It carries out the reaction S-ubiquitinyl-[E2 ubiquitin-conjugating enzyme]-L-cysteine + [acceptor protein]-L-lysine = [E2 ubiquitin-conjugating enzyme]-L-cysteine + N(6)-ubiquitinyl-[acceptor protein]-L-lysine.. It functions in the pathway protein modification; protein ubiquitination. Its activity is regulated as follows. Specifically binds phosphatidylserine. The binding to phospholipids enhances ubiquitination activity. Its function is as follows. Muscle-specific E3 ubiquitin-protein ligase that plays a central role in cell membrane repair by nucleating the assembly of the repair machinery at injury sites. Its ubiquitination activity is mediated by E2 ubiquitin-conjugating enzymes UBE2D1, UBE2D2 and UBE2D3. Acts as a sensor of oxidation: upon membrane damage, entry of extracellular oxidative environment results in disulfide bond formation and homooligomerization at the injury site. This oligomerization acts as a nucleation site for recruitment of TRIM72-containing vesicles to the injury site, leading to membrane patch formation. Probably acts upstream of the Ca(2+)-dependent membrane resealing process. Required for transport of DYSF to sites of cell injury during repair patch formation. Regulates membrane budding and exocytosis. May be involved in the regulation of the mobility of KCNB1-containing endocytic vesicles. The protein is Tripartite motif-containing protein 72 of Rattus norvegicus (Rat).